A 102-amino-acid polypeptide reads, in one-letter code: ATP synthase subunit c (102 aa).

A run of 2 helical transmembrane segments spans residues 34–54 (IGAG…GYIF) and 80–100 (AVSE…IFVA).

Belongs to the ATPase C chain family. As to quaternary structure, F-type ATPases have 2 components, F(1) - the catalytic core - and F(0) - the membrane proton channel. F(1) has five subunits: alpha(3), beta(3), gamma(1), delta(1), epsilon(1). F(0) has three main subunits: a(1), b(2) and c(10-14). The alpha and beta chains form an alternating ring which encloses part of the gamma chain. F(1) is attached to F(0) by a central stalk formed by the gamma and epsilon chains, while a peripheral stalk is formed by the delta and b chains.

The protein resides in the cell membrane. F(1)F(0) ATP synthase produces ATP from ADP in the presence of a proton or sodium gradient. F-type ATPases consist of two structural domains, F(1) containing the extramembraneous catalytic core and F(0) containing the membrane proton channel, linked together by a central stalk and a peripheral stalk. During catalysis, ATP synthesis in the catalytic domain of F(1) is coupled via a rotary mechanism of the central stalk subunits to proton translocation. Its function is as follows. Key component of the F(0) channel; it plays a direct role in translocation across the membrane. A homomeric c-ring of between 10-14 subunits forms the central stalk rotor element with the F(1) delta and epsilon subunits. This chain is ATP synthase subunit c, found in Mycoplasma genitalium (strain ATCC 33530 / DSM 19775 / NCTC 10195 / G37) (Mycoplasmoides genitalium).